A 549-amino-acid polypeptide reads, in one-letter code: Zinc finger protein 18 (549 aa).

The region spanning 41–123 (RQLFRQFRYQ…TLVESLKGDP (83 aa)) is the SCAN box domain. Residues 211 to 283 (DLGASLLPAA…YLHVNEKIPR (73 aa)) enclose the KRAB domain. C2H2-type zinc fingers lie at residues 408 to 430 (PTCR…QRTH), 436 to 458 (FQCT…QRTH), 464 to 486 (CKCD…EKIH), 492 to 514 (YKCP…QRVH), and 520 to 542 (YKCS…QRSH).

It belongs to the krueppel C2H2-type zinc-finger protein family.

It is found in the nucleus. In terms of biological role, may be involved in transcriptional regulation. This chain is Zinc finger protein 18 (ZNF18), found in Homo sapiens (Human).